Here is a 240-residue protein sequence, read N- to C-terminus: Aquaporin Z (240 aa).

The next 2 membrane-spanning stretches (helical) occupy residues M10–F30 and I35–I55. The NPA 1 motif lies at N64–A66. The next 3 helical transmembrane spans lie at V90 to F110, L131 to G151, and G160 to V180. Positions N186 to A188 match the NPA 2 motif. A helical transmembrane segment spans residues I202–I222.

This sequence belongs to the MIP/aquaporin (TC 1.A.8) family. As to quaternary structure, homotetramer.

It localises to the cell inner membrane. It carries out the reaction H2O(in) = H2O(out). In terms of biological role, channel that permits osmotically driven movement of water in both directions. It is involved in the osmoregulation and in the maintenance of cell turgor during volume expansion in rapidly growing cells. It mediates rapid entry or exit of water in response to abrupt changes in osmolarity. The sequence is that of Aquaporin Z from Rhodopseudomonas palustris (strain ATCC BAA-98 / CGA009).